The primary structure comprises 239 residues: Ribosomal RNA small subunit methyltransferase G (239 aa).

Residues glycine 77, phenylalanine 82, 128 to 129, and arginine 146 contribute to the S-adenosyl-L-methionine site; that span reads AE. The segment at 217-239 is disordered; that stretch reads RRQTSKKYPRKPGTPNKSPLVES.

This sequence belongs to the methyltransferase superfamily. RNA methyltransferase RsmG family.

It localises to the cytoplasm. Specifically methylates the N7 position of guanine in position 535 of 16S rRNA. The polypeptide is Ribosomal RNA small subunit methyltransferase G (Staphylococcus epidermidis (strain ATCC 12228 / FDA PCI 1200)).